The primary structure comprises 480 residues: Alpha-glucosidase (480 aa).

Residue 4-70 coordinates NAD(+); sequence VKIGIIGAGS…ADLKFEKTMN (67 aa). Substrate is bound by residues Asp119 and Asn153. Position 174 (Cys174) interacts with Mn(2+). His175 serves as the catalytic Proton donor. His203 contacts Mn(2+). Asp260 serves as the catalytic Proton acceptor.

The protein belongs to the glycosyl hydrolase 4 family. In terms of assembly, homodimer. NAD(+) serves as cofactor. The cofactor is Mn(2+). Co(2+) is required as a cofactor. It depends on Ni(2+) as a cofactor.

The enzyme catalyses Hydrolysis of terminal, non-reducing (1-&gt;4)-linked alpha-D-glucose residues with release of alpha-D-glucose.. Inhibited by Hg(2+) ion and EDTA. Its function is as follows. Alpha-glycosidase with a very broad specificity. Hydrolyzes maltose and other small maltooligosaccharides but is inactive against the polymeric substrate starch. AglA is not specific with respect to the configuration at the C-4 position of its substrates because glycosidic derivatives of D-galactose are also hydrolyzed. Does not cleave beta-glycosidic bonds. The protein is Alpha-glucosidase (aglA) of Thermotoga maritima (strain ATCC 43589 / DSM 3109 / JCM 10099 / NBRC 100826 / MSB8).